Reading from the N-terminus, the 172-residue chain is Scytalone dehydratase-like protein Arp1 (172 aa).

Residue Y49 coordinates substrate. Catalysis depends on residues H84 and H109. Residue N130 coordinates substrate.

The protein belongs to the scytalone dehydratase family. Homotrimer. Each subunit contains an active site, located in the central part of the hydrophobic core of the monomer, which functions independently.

Its function is as follows. Scytalone dehydratase-like protein; part of the Pks2 gene cluster that mediates the formation of infectious structures (appressoria), enabling these fungi to kill insects faster. The product of the Pks2 gene cluster is different from the one of Pks1 and has still not been identified. This chain is Scytalone dehydratase-like protein Arp1, found in Metarhizium guizhouense (strain ARSEF 977).